The sequence spans 146 residues: Snaclec stejaggregin-B subunit beta-2 (146 aa).

Positions 1-23 are cleaved as a signal peptide; it reads MGRFIFVSFGLLVVFLSLSGSGA. The 112-residue stretch at 32 to 143 folds into the C-type lectin domain; sequence YDLYCYRVFQ…CSQTYPFVCK (112 aa). 2 disulfide bridges follow: Cys53–Cys142 and Cys119–Cys134.

This sequence belongs to the snaclec family. Heteromultimer; disulfide-linked. In terms of tissue distribution, expressed by the venom gland.

It is found in the secreted. Functionally, interferes with one step of hemostasis (modulation of platelet aggregation, or coagulation cascade, for example). In Trimeresurus stejnegeri (Chinese green tree viper), this protein is Snaclec stejaggregin-B subunit beta-2.